Consider the following 896-residue polypeptide: Protein translocase subunit SecA (896 aa).

ATP-binding positions include Gln87, 105-109 (GEGKT), and Asp507. The disordered stretch occupies residues 855-879 (LSENDEASETQTFRRQEKKIGRNDP). Residues 866–876 (TFRRQEKKIGR) are compositionally biased toward basic and acidic residues. Zn(2+)-binding residues include Cys880, Cys882, Cys891, and His892.

The protein belongs to the SecA family. As to quaternary structure, monomer and homodimer. Part of the essential Sec protein translocation apparatus which comprises SecA, SecYEG and auxiliary proteins SecDF-YajC and YidC. Zn(2+) serves as cofactor.

The protein localises to the cell inner membrane. It localises to the cytoplasm. It catalyses the reaction ATP + H2O + cellular proteinSide 1 = ADP + phosphate + cellular proteinSide 2.. In terms of biological role, part of the Sec protein translocase complex. Interacts with the SecYEG preprotein conducting channel. Has a central role in coupling the hydrolysis of ATP to the transfer of proteins into and across the cell membrane, serving both as a receptor for the preprotein-SecB complex and as an ATP-driven molecular motor driving the stepwise translocation of polypeptide chains across the membrane. The protein is Protein translocase subunit SecA of Legionella pneumophila (strain Lens).